We begin with the raw amino-acid sequence, 409 residues long: Elongation factor Tu (409 aa).

Residues 10-214 (KPHVNIGTIG…AVDSYIPDPE (205 aa)) form the tr-type G domain. Residues 19–26 (GHVDHGKT) form a G1 region. 19–26 (GHVDHGKT) contributes to the GTP binding site. Thr-26 is a Mg(2+) binding site. The G2 stretch occupies residues 60–64 (GITIN). Residues 81-84 (DCPG) are G3. Residues 81 to 85 (DCPGH) and 136 to 139 (NKED) contribute to the GTP site. The tract at residues 136–139 (NKED) is G4. The G5 stretch occupies residues 174–176 (SGL).

The protein belongs to the TRAFAC class translation factor GTPase superfamily. Classic translation factor GTPase family. EF-Tu/EF-1A subfamily. In terms of assembly, monomer.

It localises to the cytoplasm. It carries out the reaction GTP + H2O = GDP + phosphate + H(+). In terms of biological role, GTP hydrolase that promotes the GTP-dependent binding of aminoacyl-tRNA to the A-site of ribosomes during protein biosynthesis. The sequence is that of Elongation factor Tu from Trichormus variabilis (strain ATCC 29413 / PCC 7937) (Anabaena variabilis).